Here is a 360-residue protein sequence, read N- to C-terminus: Biotin synthase (360 aa).

The segment at 1-25 is disordered; that stretch reads MQHAPLNFVPDAAKVPPTPGQSPNA. The region spanning 58-285 is the Radical SAM core domain; that stretch reads NAVQLSTLLS…KAMVRLSAGR (228 aa). The [4Fe-4S] cluster site is built by Cys73, Cys77, and Cys80. Positions 117, 148, 208, and 280 each coordinate [2Fe-2S] cluster. A disordered region spans residues 340 to 360; sequence QAEGAQHSHSSHCHIDITPAD.

Belongs to the radical SAM superfamily. Biotin synthase family. As to quaternary structure, homodimer. It depends on [4Fe-4S] cluster as a cofactor. [2Fe-2S] cluster is required as a cofactor.

The catalysed reaction is (4R,5S)-dethiobiotin + (sulfur carrier)-SH + 2 reduced [2Fe-2S]-[ferredoxin] + 2 S-adenosyl-L-methionine = (sulfur carrier)-H + biotin + 2 5'-deoxyadenosine + 2 L-methionine + 2 oxidized [2Fe-2S]-[ferredoxin]. Its pathway is cofactor biosynthesis; biotin biosynthesis; biotin from 7,8-diaminononanoate: step 2/2. Its function is as follows. Catalyzes the conversion of dethiobiotin (DTB) to biotin by the insertion of a sulfur atom into dethiobiotin via a radical-based mechanism. This is Biotin synthase from Ralstonia nicotianae (strain ATCC BAA-1114 / GMI1000) (Ralstonia solanacearum).